We begin with the raw amino-acid sequence, 361 residues long: DNA replication and repair protein RecF (361 aa).

30–37 contributes to the ATP binding site; that stretch reads GANGSGKT.

Belongs to the RecF family.

Its subcellular location is the cytoplasm. The RecF protein is involved in DNA metabolism; it is required for DNA replication and normal SOS inducibility. RecF binds preferentially to single-stranded, linear DNA. It also seems to bind ATP. The polypeptide is DNA replication and repair protein RecF (Glaesserella parasuis serovar 5 (strain SH0165) (Haemophilus parasuis)).